A 56-amino-acid chain; its full sequence is Large ribosomal subunit protein bL32 (56 aa).

The tract at residues 1 to 21 (MGVPQRRQSHARKNKRRSEWR) is disordered. Residues 7 to 19 (RQSHARKNKRRSE) show a composition bias toward basic residues.

The protein belongs to the bacterial ribosomal protein bL32 family.

The chain is Large ribosomal subunit protein bL32 from Syntrophomonas wolfei subsp. wolfei (strain DSM 2245B / Goettingen).